An 863-amino-acid chain; its full sequence is Leucine--tRNA ligase (863 aa).

Residues 42–52 (PYPSGRLHMGH) carry the 'HIGH' region motif. Positions 618 to 622 (KMSKS) match the 'KMSKS' region motif. Position 621 (lysine 621) interacts with ATP.

This sequence belongs to the class-I aminoacyl-tRNA synthetase family.

Its subcellular location is the cytoplasm. The enzyme catalyses tRNA(Leu) + L-leucine + ATP = L-leucyl-tRNA(Leu) + AMP + diphosphate. The polypeptide is Leucine--tRNA ligase (Colwellia psychrerythraea (strain 34H / ATCC BAA-681) (Vibrio psychroerythus)).